Reading from the N-terminus, the 546-residue chain is Cysteine--tRNA ligase (546 aa).

Residue Cys57 participates in Zn(2+) binding. The 'HIGH' region signature appears at 59–69 (ATVQSSPHIGH). The segment at 211 to 236 (PSVDATGADKYNPVDPADASPDKHDP) is disordered. 3 residues coordinate Zn(2+): Cys270, His295, and Glu299. The 'KMSKS' region signature appears at 326 to 330 (KMSKS). Position 329 (Lys329) interacts with ATP.

The protein belongs to the class-I aminoacyl-tRNA synthetase family. As to quaternary structure, monomer. It depends on Zn(2+) as a cofactor.

The protein resides in the cytoplasm. The catalysed reaction is tRNA(Cys) + L-cysteine + ATP = L-cysteinyl-tRNA(Cys) + AMP + diphosphate. This chain is Cysteine--tRNA ligase, found in Bifidobacterium longum (strain NCC 2705).